The chain runs to 616 residues: Dihydroxy-acid dehydratase (616 aa).

Asp81 is a Mg(2+) binding site. Cys122 serves as a coordination point for [2Fe-2S] cluster. Residues Asp123 and Lys124 each coordinate Mg(2+). Residue Lys124 is modified to N6-carboxylysine. [2Fe-2S] cluster is bound at residue Cys195. Residue Glu491 coordinates Mg(2+). The active-site Proton acceptor is Ser517.

The protein belongs to the IlvD/Edd family. Homodimer. The cofactor is [2Fe-2S] cluster. Mg(2+) is required as a cofactor.

The catalysed reaction is (2R)-2,3-dihydroxy-3-methylbutanoate = 3-methyl-2-oxobutanoate + H2O. The enzyme catalyses (2R,3R)-2,3-dihydroxy-3-methylpentanoate = (S)-3-methyl-2-oxopentanoate + H2O. It functions in the pathway amino-acid biosynthesis; L-isoleucine biosynthesis; L-isoleucine from 2-oxobutanoate: step 3/4. It participates in amino-acid biosynthesis; L-valine biosynthesis; L-valine from pyruvate: step 3/4. In terms of biological role, functions in the biosynthesis of branched-chain amino acids. Catalyzes the dehydration of (2R,3R)-2,3-dihydroxy-3-methylpentanoate (2,3-dihydroxy-3-methylvalerate) into 2-oxo-3-methylpentanoate (2-oxo-3-methylvalerate) and of (2R)-2,3-dihydroxy-3-methylbutanoate (2,3-dihydroxyisovalerate) into 2-oxo-3-methylbutanoate (2-oxoisovalerate), the penultimate precursor to L-isoleucine and L-valine, respectively. The polypeptide is Dihydroxy-acid dehydratase (Salmonella typhi).